The sequence spans 166 residues: Transcription factor HES-5 (166 aa).

Residues 16–72 (KNRLRKPVVEKMRRDRINSSIEQLKLLLEQEFARHQPNSKLEKADILEMAVSYLKHS) enclose the bHLH domain. Positions 88–119 (YSEGYSWCLQEAVQFLTLHAASDTQMKLLYHF) constitute an Orange domain. Positions 125–166 (PAAPVKETPTPGAAPQPARSSTKAAASVSTSRQSACGLWRPW) are disordered. Low complexity predominate over residues 142–156 (ARSSTKAAASVSTSR). The short motif at 163-166 (WRPW) is the WRPW motif element.

Transcription repression requires formation of a complex with a corepressor protein of the Groucho/TLE family. Expressed predominantly in embryonic neural lineage cells.

The protein resides in the nucleus. In terms of biological role, transcriptional repressor of genes that require a bHLH protein for their transcription. Plays an important role as neurogenesis negative regulator. In Rattus norvegicus (Rat), this protein is Transcription factor HES-5 (Hes5).